Consider the following 93-residue polypeptide: MPRSLKKGPFVDDHLLAKVDVQNEKGTKQVIKTWSRRSTIIPDFIGHTFAVHDGRKHVPVFVSDSMVGHKLGEFAPTRTFKGHIKDDRKAKRR.

This sequence belongs to the universal ribosomal protein uS19 family.

Its function is as follows. Protein S19 forms a complex with S13 that binds strongly to the 16S ribosomal RNA. This Rhodococcus erythropolis (strain PR4 / NBRC 100887) protein is Small ribosomal subunit protein uS19.